The chain runs to 206 residues: MARYLGPTCKLSRREGTDLFLKSGVRPLESKCKAETAPGQHGQRRGRLSDYGVQLREKQKVRRTYGLLEKQFRSYYKEAARLKGATGENLLKLLESRLDNVVYRMGFGATRAESRQLVSHKAILVNGKALNIPSYQVSEGDVIAVREKSKNQLRIQNALGIAAQRPDVEWVDVNADKKEGTFKRVPDRVDLPADINENLIVELYSK.

One can recognise an S4 RNA-binding domain in the interval 96–156; it reads SRLDNVVYRM…EKSKNQLRIQ (61 aa).

Belongs to the universal ribosomal protein uS4 family. Part of the 30S ribosomal subunit. Contacts protein S5. The interaction surface between S4 and S5 is involved in control of translational fidelity.

Functionally, one of the primary rRNA binding proteins, it binds directly to 16S rRNA where it nucleates assembly of the body of the 30S subunit. In terms of biological role, with S5 and S12 plays an important role in translational accuracy. The protein is Small ribosomal subunit protein uS4 of Teredinibacter turnerae (strain ATCC 39867 / T7901).